The sequence spans 339 residues: Anthranilate phosphoribosyltransferase (339 aa).

5-phospho-alpha-D-ribose 1-diphosphate-binding positions include G81, 84-85, T89, 91-94, 109-117, and A121; these read GD, NIST, and KHGNRNLSS. G81 contacts anthranilate. S93 serves as a coordination point for Mg(2+). N112 contacts anthranilate. Residue R167 participates in anthranilate binding. Positions 226 and 227 each coordinate Mg(2+).

The protein belongs to the anthranilate phosphoribosyltransferase family. As to quaternary structure, homodimer. The cofactor is Mg(2+).

The catalysed reaction is N-(5-phospho-beta-D-ribosyl)anthranilate + diphosphate = 5-phospho-alpha-D-ribose 1-diphosphate + anthranilate. The protein operates within amino-acid biosynthesis; L-tryptophan biosynthesis; L-tryptophan from chorismate: step 2/5. In terms of biological role, catalyzes the transfer of the phosphoribosyl group of 5-phosphorylribose-1-pyrophosphate (PRPP) to anthranilate to yield N-(5'-phosphoribosyl)-anthranilate (PRA). This is Anthranilate phosphoribosyltransferase from Roseobacter denitrificans (strain ATCC 33942 / OCh 114) (Erythrobacter sp. (strain OCh 114)).